Consider the following 230-residue polypeptide: 2-phytyl-1,4-naphtoquinone methyltransferase (230 aa).

Belongs to the class I-like SAM-binding methyltransferase superfamily. MenG/UbiE family.

The catalysed reaction is demethylphylloquinol + S-adenosyl-L-methionine = phylloquinol + S-adenosyl-L-homocysteine + H(+). The protein operates within cofactor biosynthesis; phylloquinone biosynthesis. Functionally, methyltransferase required for the conversion of 2-phytyl-1,4-beta-naphthoquinol to phylloquinol. This Nostoc punctiforme (strain ATCC 29133 / PCC 73102) protein is 2-phytyl-1,4-naphtoquinone methyltransferase.